The following is a 253-amino-acid chain: uncharacterized protein (253 aa).

The span at 175–184 shows a compositional bias: polar residues; that stretch reads NPTQTSPGKP. The segment at 175-253 is disordered; it reads NPTQTSPGKP…ATENEDRLPS (79 aa). Ser180 bears the Phosphoserine mark. Composition is skewed to low complexity over residues 185–196 and 203–214; these read STSESSQTDTST and TPTTTRASSYTT. Polar residues predominate over residues 215–242; it reads LVSTSNQVSNEAEASAVETSANQAQNTE.

Belongs to the TRAPP small subunits family. BET3 subfamily.

This is an uncharacterized protein from Schizosaccharomyces pombe (strain 972 / ATCC 24843) (Fission yeast).